The following is a 285-amino-acid chain: Bifunctional protein FolD (285 aa).

NADP(+)-binding positions include 169-171 (GRS), Ser-194, and Ile-235.

The protein belongs to the tetrahydrofolate dehydrogenase/cyclohydrolase family. As to quaternary structure, homodimer.

It carries out the reaction (6R)-5,10-methylene-5,6,7,8-tetrahydrofolate + NADP(+) = (6R)-5,10-methenyltetrahydrofolate + NADPH. The enzyme catalyses (6R)-5,10-methenyltetrahydrofolate + H2O = (6R)-10-formyltetrahydrofolate + H(+). The protein operates within one-carbon metabolism; tetrahydrofolate interconversion. Its function is as follows. Catalyzes the oxidation of 5,10-methylenetetrahydrofolate to 5,10-methenyltetrahydrofolate and then the hydrolysis of 5,10-methenyltetrahydrofolate to 10-formyltetrahydrofolate. The polypeptide is Bifunctional protein FolD (Microcystis aeruginosa (strain NIES-843 / IAM M-2473)).